The chain runs to 266 residues: Undecaprenyl-diphosphatase (266 aa).

A run of 7 helical transmembrane segments spans residues 41 to 61, 82 to 102, 106 to 126, 140 to 160, 180 to 200, 213 to 233, and 245 to 265; these read NLAF…VILW, YVIN…FFKD, AIFG…AALL, ISMK…LPGL, LAQF…LLDG, IPTL…CLAC, and LIYF…VSQL.

Belongs to the UppP family.

The protein localises to the cell inner membrane. It catalyses the reaction di-trans,octa-cis-undecaprenyl diphosphate + H2O = di-trans,octa-cis-undecaprenyl phosphate + phosphate + H(+). In terms of biological role, catalyzes the dephosphorylation of undecaprenyl diphosphate (UPP). Confers resistance to bacitracin. The polypeptide is Undecaprenyl-diphosphatase (Bacteroides fragilis (strain ATCC 25285 / DSM 2151 / CCUG 4856 / JCM 11019 / LMG 10263 / NCTC 9343 / Onslow / VPI 2553 / EN-2)).